We begin with the raw amino-acid sequence, 140 residues long: RxLR effector protein CRE9 (140 aa).

Positions 1–24 are cleaved as a signal peptide; that stretch reads MRTSVFVALVVATFVATCISFTSA. The RxLR-dEER motif lies at 43–61; it reads RTLAEADDWWLASTNTEER. A helical membrane pass occupies residues 119 to 139; that stretch reads LKILYGALLAGLIIVGVEAML.

Belongs to the RxLR effector family.

It localises to the secreted. Its subcellular location is the host cell. It is found in the membrane. In terms of biological role, effector that is involved in host plant infection. Contributes to virulence during the early infection stage, by inhibiting plant defense responses induced by both PAMP-triggered immunity (PTI) and effector-triggered immunity (ETI). In Phytophthora infestans (strain T30-4) (Potato late blight agent), this protein is RxLR effector protein CRE9.